The sequence spans 82 residues: Small ribosomal subunit protein uS17 (82 aa).

This sequence belongs to the universal ribosomal protein uS17 family. As to quaternary structure, part of the 30S ribosomal subunit.

Functionally, one of the primary rRNA binding proteins, it binds specifically to the 5'-end of 16S ribosomal RNA. The chain is Small ribosomal subunit protein uS17 from Ehrlichia ruminantium (strain Gardel).